Consider the following 380-residue polypeptide: MSLSDWHLAVKLADQPLAPKSILRLPETELGEYSLGGYSISFLKQLIAGKLQESVPDPELIDLIYCGRKLKDDQTLDFYGIQPGSTVHVLRKSWPEPDQKPEPVDKVAALREFRVLHTALHSSSSYREAVFKMLSNKESLDQIIVATPGLSSDPIALGVLQDKDLFSVFADPNMLDTLVPAHPALVNAIVLVLHSVAGSTPMPGADSSSRGMPSSAYRDMPGGFLFEGLSDDEDDFHPSARSTPSSSTPSSRPASLGYSGAAGPRPITQSELATALALASTPESSSHTPTPGTQGQSSGTSPMSSSVQSGTPITNDLFSQALQHALQASGQPSLQSQWQPQLQQLRDMGIQDDELSLRALQATGGDIQAALELIFAGGAP.

The Ubiquitin-like domain maps to 18–98; that stretch reads APKSILRLPE…VLRKSWPEPD (81 aa). Residues 201-313 form a disordered region; that stretch reads PMPGADSSSR…SSSVQSGTPI (113 aa). S230 bears the Phosphoserine mark. Composition is skewed to low complexity over residues 239-255 and 270-312; these read SARS…RPAS and SELA…SGTP. Residues 333-377 form the UBA domain; that stretch reads SLQSQWQPQLQQLRDMGIQDDELSLRALQATGGDIQAALELIFAG.

As to quaternary structure, binds ubiquitin. Interacts with MAVS; this interaction enhances TRIM21-dependent 'Lys-27'-linked polyubiquitination of MAVS. Deubiquitinated by OTUD4 which stabilizes UBL7 expression.

In terms of biological role, interferon-stimulated protein that positively regulates RNA virus-triggered innate immune signaling. Mechanistically, promotes 'Lys-27'-linked polyubiquitination of MAVS through TRIM21 leading to enhanced the IFN signaling pathway. In Bos taurus (Bovine), this protein is Ubiquitin-like protein 7 (UBL7).